Here is a 427-residue protein sequence, read N- to C-terminus: Glutamate-1-semialdehyde 2,1-aminomutase (427 aa).

N6-(pyridoxal phosphate)lysine is present on Lys265.

It belongs to the class-III pyridoxal-phosphate-dependent aminotransferase family. HemL subfamily. Homodimer. Requires pyridoxal 5'-phosphate as cofactor.

The protein resides in the cytoplasm. It carries out the reaction (S)-4-amino-5-oxopentanoate = 5-aminolevulinate. Its pathway is porphyrin-containing compound metabolism; protoporphyrin-IX biosynthesis; 5-aminolevulinate from L-glutamyl-tRNA(Glu): step 2/2. The chain is Glutamate-1-semialdehyde 2,1-aminomutase from Nitratiruptor sp. (strain SB155-2).